The primary structure comprises 291 residues: uncharacterized protein (291 aa).

This is an uncharacterized protein from Haemophilus influenzae (strain ATCC 51907 / DSM 11121 / KW20 / Rd).